A 503-amino-acid polypeptide reads, in one-letter code: Maturase K (503 aa).

This sequence belongs to the intron maturase 2 family. MatK subfamily.

The protein resides in the plastid. It is found in the chloroplast. Functionally, usually encoded in the trnK tRNA gene intron. Probably assists in splicing its own and other chloroplast group II introns. This Liquidambar formosana (Formosan gum) protein is Maturase K.